The following is a 674-amino-acid chain: Translation factor GUF1, mitochondrial (674 aa).

A mitochondrion-targeting transit peptide spans 1 to 48 (MRGCLQPARWLTTATLRRPLLSCPRQLPTRYNPFPRPFHHAPVLQARQ). Positions 66 to 246 (ERYRNFCIVA…AIIESIPALL (181 aa)) constitute a tr-type G domain. GTP-binding positions include 75–82 (AHVDHGKS), 139–143 (DTPGH), and 193–196 (NKVD).

This sequence belongs to the TRAFAC class translation factor GTPase superfamily. Classic translation factor GTPase family. LepA subfamily.

It is found in the mitochondrion inner membrane. It carries out the reaction GTP + H2O = GDP + phosphate + H(+). In terms of biological role, promotes mitochondrial protein synthesis. May act as a fidelity factor of the translation reaction, by catalyzing a one-codon backward translocation of tRNAs on improperly translocated ribosomes. Binds to mitochondrial ribosomes in a GTP-dependent manner. The sequence is that of Translation factor GUF1, mitochondrial from Arthroderma otae (strain ATCC MYA-4605 / CBS 113480) (Microsporum canis).